A 545-amino-acid chain; its full sequence is Chaperonin GroEL (545 aa).

ATP contacts are provided by residues 30 to 33, K51, 87 to 91, G415, and D495; these read TLGP and DGTTT.

It belongs to the chaperonin (HSP60) family. Forms a cylinder of 14 subunits composed of two heptameric rings stacked back-to-back. Interacts with the co-chaperonin GroES.

Its subcellular location is the cytoplasm. The enzyme catalyses ATP + H2O + a folded polypeptide = ADP + phosphate + an unfolded polypeptide.. In terms of biological role, together with its co-chaperonin GroES, plays an essential role in assisting protein folding. The GroEL-GroES system forms a nano-cage that allows encapsulation of the non-native substrate proteins and provides a physical environment optimized to promote and accelerate protein folding. The protein is Chaperonin GroEL of Yersinia pestis bv. Antiqua (strain Antiqua).